The primary structure comprises 233 residues: Glyceraldehyde 3-phosphate phosphatase (233 aa).

This sequence belongs to the HAD-like hydrolase superfamily. The cofactor is Mg(2+).

Functionally, catalyzes the dephosphorylation of D,L-glyceraldehyde 3-phosphate in vitro. This chain is Glyceraldehyde 3-phosphate phosphatase, found in Methanopyrus kandleri (strain AV19 / DSM 6324 / JCM 9639 / NBRC 100938).